The following is a 63-amino-acid chain: Large ribosomal subunit protein uL29 (63 aa).

It belongs to the universal ribosomal protein uL29 family.

The protein is Large ribosomal subunit protein uL29 of Histophilus somni (strain 129Pt) (Haemophilus somnus).